The sequence spans 144 residues: Single-stranded DNA-binding protein 3 (144 aa).

The region spanning Met-1–Glu-103 is the SSB domain. Residues Met-112–Ile-134 show a composition bias toward polar residues. Residues Met-112 to Phe-144 are disordered.

In terms of assembly, homotetramer.

This Clostridium acetobutylicum (strain ATCC 824 / DSM 792 / JCM 1419 / IAM 19013 / LMG 5710 / NBRC 13948 / NRRL B-527 / VKM B-1787 / 2291 / W) protein is Single-stranded DNA-binding protein 3 (ssb3).